A 233-amino-acid chain; its full sequence is UPF0173 metal-dependent hydrolase Acid345_3437 (233 aa).

It belongs to the UPF0173 family.

This Koribacter versatilis (strain Ellin345) protein is UPF0173 metal-dependent hydrolase Acid345_3437.